The chain runs to 331 residues: Probable allantoicase (331 aa).

Belongs to the allantoicase family.

The enzyme catalyses allantoate + H2O = (S)-ureidoglycolate + urea. Its pathway is nitrogen metabolism; (S)-allantoin degradation; (S)-ureidoglycolate from allantoate (aminidohydrolase route): step 1/1. The sequence is that of Probable allantoicase from Pseudomonas savastanoi pv. phaseolicola (strain 1448A / Race 6) (Pseudomonas syringae pv. phaseolicola (strain 1448A / Race 6)).